A 361-amino-acid chain; its full sequence is Blue-sensitive opsin (361 aa).

Over 1–43 (MHPPRPTTDLPEDFYIPMALDAPNITALSPFLVPQTHLGSPGL) the chain is Extracellular. The N-linked (GlcNAc...) asparagine glycan is linked to asparagine 24. The chain crosses the membrane as a helical span at residues 44–68 (FRAMAAFMFLLIALGVPINTLTIFC). Residues 69 to 80 (TARFRKLRSHLN) are Cytoplasmic-facing. A helical transmembrane segment spans residues 81-106 (YILVNLALANLLVILVGSTTACYSFS). Topologically, residues 107-120 (QMYFALGPTACKIE) are extracellular. Cysteine 117 and cysteine 194 are joined by a disulfide. A helical membrane pass occupies residues 121-140 (GFAATLGGMVSLWSLAVVAF). The Cytoplasmic segment spans residues 141–159 (ERFLVICKPLGNFTFRGSH). A helical transmembrane segment spans residues 160-183 (AVLGCVATWVLGFVASAPPLFGWS). Topologically, residues 184–209 (RYIPEGLQCSCGPDWYTTDNKWHNES) are extracellular. The chain crosses the membrane as a helical span at residues 210–237 (YVLFLFTFCFGVPLAIIVFSYGRLLITL). Residues 238-259 (RAVARQQEQSATTQKADREVTK) lie on the Cytoplasmic side of the membrane. The chain crosses the membrane as a helical span at residues 260 to 283 (MVVVMVLGFLVCWAPYTAFALWVV). Residues 284–291 (THRGRSFE) lie on the Extracellular side of the membrane. A helical membrane pass occupies residues 292–316 (VGLASIPSVFSKSSTVYNPVIYVLM). Lysine 303 carries the N6-(retinylidene)lysine modification. The Cytoplasmic portion of the chain corresponds to 317 to 361 (NKQFRSCMLKLLFCGRSPFGDDEDVSGSSQATQVSSVSSSHVAPA). Positions 338–361 (DEDVSGSSQATQVSSVSSSHVAPA) are disordered. Residues 342-361 (SGSSQATQVSSVSSSHVAPA) show a composition bias toward low complexity.

Belongs to the G-protein coupled receptor 1 family. Opsin subfamily. In terms of processing, phosphorylated on some or all of the serine and threonine residues present in the C-terminal region. The color pigments are found in the cone photoreceptor cells.

It localises to the membrane. Visual pigments are the light-absorbing molecules that mediate vision. They consist of an apoprotein, opsin, covalently linked to cis-retinal. The chain is Blue-sensitive opsin from Gallus gallus (Chicken).